The sequence spans 377 residues: Bacterial actin-related protein (377 aa).

It belongs to the actin family.

In terms of biological role, may be a dominant-negative inhibitor of eukaryotic actin polymerization. This is Bacterial actin-related protein (barP) from Haliangium ochraceum (strain DSM 14365 / JCM 11303 / SMP-2).